The chain runs to 454 residues: Probable glycine dehydrogenase (decarboxylating) subunit 1 (454 aa).

The protein belongs to the GcvP family. N-terminal subunit subfamily. In terms of assembly, the glycine cleavage system is composed of four proteins: P, T, L and H. In this organism, the P 'protein' is a heterodimer of two subunits.

It catalyses the reaction N(6)-[(R)-lipoyl]-L-lysyl-[glycine-cleavage complex H protein] + glycine + H(+) = N(6)-[(R)-S(8)-aminomethyldihydrolipoyl]-L-lysyl-[glycine-cleavage complex H protein] + CO2. The glycine cleavage system catalyzes the degradation of glycine. The P protein binds the alpha-amino group of glycine through its pyridoxal phosphate cofactor; CO(2) is released and the remaining methylamine moiety is then transferred to the lipoamide cofactor of the H protein. The protein is Probable glycine dehydrogenase (decarboxylating) subunit 1 of Sorangium cellulosum (strain So ce56) (Polyangium cellulosum (strain So ce56)).